A 314-amino-acid polypeptide reads, in one-letter code: Oxaloacetate tautomerase FAHD2A, mitochondrial (314 aa).

A mitochondrion-targeting transit peptide spans 1–84; that stretch reads MLGSSGRRLL…ATLSVVRRAL (84 aa). Residues glutamate 159, glutamate 161, and aspartate 190 each contribute to the Mg(2+) site.

Belongs to the FAH family. It depends on Mg(2+) as a cofactor. Mn(2+) is required as a cofactor.

It localises to the mitochondrion. It carries out the reaction oxaloacetate = enol-oxaloacetate. Functionally, tautomerase that converts enol-oxaloacetate, a strong inhibitor of succinate dehydrogenase, to the physiological keto form of oxaloacetate. It is thereby required to maximize aerobic respiration efficiency by preventing succinate dehydrogenase inhibition. In Bos taurus (Bovine), this protein is Oxaloacetate tautomerase FAHD2A, mitochondrial.